The chain runs to 1176 residues: Pesticidal crystal protein Cry1Aa (1176 aa).

The protein belongs to the delta endotoxin family.

Functionally, promotes colloidosmotic lysis by binding to the midgut epithelial cells of many lepidopteran larvae. The polypeptide is Pesticidal crystal protein Cry1Aa (cry1Aa) (Bacillus thuringiensis subsp. aizawai).